A 206-amino-acid chain; its full sequence is Small ribosomal subunit protein uS4A (206 aa).

The 61-residue stretch at 96-156 folds into the S4 RNA-binding domain; sequence GRLDNVVYRM…EKAKKQSRIG (61 aa).

The protein belongs to the universal ribosomal protein uS4 family. Part of the 30S ribosomal subunit. Contacts protein S5. The interaction surface between S4 and S5 is involved in control of translational fidelity.

Its function is as follows. One of the primary rRNA binding proteins, it binds directly to 16S rRNA where it nucleates assembly of the body of the 30S subunit. Functionally, with S5 and S12 plays an important role in translational accuracy. The protein is Small ribosomal subunit protein uS4A of Psychromonas ingrahamii (strain DSM 17664 / CCUG 51855 / 37).